The sequence spans 431 residues: Enolase (431 aa).

Gln-166 contacts (2R)-2-phosphoglycerate. Glu-208 (proton donor) is an active-site residue. Residues Asp-245, Glu-288, and Asp-315 each coordinate Mg(2+). Positions 340, 369, 370, and 391 each coordinate (2R)-2-phosphoglycerate. Lys-340 functions as the Proton acceptor in the catalytic mechanism.

The protein belongs to the enolase family. It depends on Mg(2+) as a cofactor.

It is found in the cytoplasm. The protein resides in the secreted. The protein localises to the cell surface. The catalysed reaction is (2R)-2-phosphoglycerate = phosphoenolpyruvate + H2O. Its pathway is carbohydrate degradation; glycolysis; pyruvate from D-glyceraldehyde 3-phosphate: step 4/5. Catalyzes the reversible conversion of 2-phosphoglycerate (2-PG) into phosphoenolpyruvate (PEP). It is essential for the degradation of carbohydrates via glycolysis. In Clostridium tetani (strain Massachusetts / E88), this protein is Enolase.